The chain runs to 256 residues: Ribosomal RNA small subunit methyltransferase A (256 aa).

S-adenosyl-L-methionine is bound by residues asparagine 12, leucine 14, glycine 39, glutamate 60, aspartate 85, and asparagine 103.

The protein belongs to the class I-like SAM-binding methyltransferase superfamily. rRNA adenine N(6)-methyltransferase family. RsmA subfamily.

It localises to the cytoplasm. The catalysed reaction is adenosine(1518)/adenosine(1519) in 16S rRNA + 4 S-adenosyl-L-methionine = N(6)-dimethyladenosine(1518)/N(6)-dimethyladenosine(1519) in 16S rRNA + 4 S-adenosyl-L-homocysteine + 4 H(+). In terms of biological role, specifically dimethylates two adjacent adenosines (A1518 and A1519) in the loop of a conserved hairpin near the 3'-end of 16S rRNA in the 30S particle. May play a critical role in biogenesis of 30S subunits. The polypeptide is Ribosomal RNA small subunit methyltransferase A (Legionella pneumophila (strain Lens)).